Consider the following 178-residue polypeptide: Transcription factor E (178 aa).

Residues 3-86 form the HTH TFE/IIEalpha-type domain; the sequence is AHEALAEIAG…YWRITDEPIQ (84 aa).

This sequence belongs to the TFE family. As to quaternary structure, monomer. Interaction with RNA polymerase subunits RpoF and RpoE is necessary for Tfe stimulatory transcription activity. Able to interact with Tbp and RNA polymerase in the absence of DNA promoter. Interacts both with the preinitiation and elongation complexes.

Its function is as follows. Transcription factor that plays a role in the activation of archaeal genes transcribed by RNA polymerase. Facilitates transcription initiation by enhancing TATA-box recognition by TATA-box-binding protein (Tbp), and transcription factor B (Tfb) and RNA polymerase recruitment. Not absolutely required for transcription in vitro, but particularly important in cases where Tbp or Tfb function is not optimal. It dynamically alters the nucleic acid-binding properties of RNA polymerases by stabilizing the initiation complex and destabilizing elongation complexes. Seems to translocate with the RNA polymerase following initiation and acts by binding to the non template strand of the transcription bubble in elongation complexes. In Thermofilum pendens (strain DSM 2475 / Hrk 5), this protein is Transcription factor E.